The following is a 402-amino-acid chain: CCA-adding enzyme (402 aa).

Residues Gly32 and Arg35 each contribute to the ATP site. Gly32 and Arg35 together coordinate CTP. Residues Asp45 and Asp47 each coordinate Mg(2+). Positions 119, 162, 165, 168, and 171 each coordinate ATP. Arg119, Asp162, Arg165, Arg168, and Arg171 together coordinate CTP.

This sequence belongs to the tRNA nucleotidyltransferase/poly(A) polymerase family. Bacterial CCA-adding enzyme type 3 subfamily. As to quaternary structure, homodimer. Requires Mg(2+) as cofactor.

The enzyme catalyses a tRNA precursor + 2 CTP + ATP = a tRNA with a 3' CCA end + 3 diphosphate. It carries out the reaction a tRNA with a 3' CCA end + 2 CTP + ATP = a tRNA with a 3' CCACCA end + 3 diphosphate. Its function is as follows. Catalyzes the addition and repair of the essential 3'-terminal CCA sequence in tRNAs without using a nucleic acid template. Adds these three nucleotides in the order of C, C, and A to the tRNA nucleotide-73, using CTP and ATP as substrates and producing inorganic pyrophosphate. tRNA 3'-terminal CCA addition is required both for tRNA processing and repair. Also involved in tRNA surveillance by mediating tandem CCA addition to generate a CCACCA at the 3' terminus of unstable tRNAs. While stable tRNAs receive only 3'-terminal CCA, unstable tRNAs are marked with CCACCA and rapidly degraded. In Lactococcus lactis subsp. cremoris (strain SK11), this protein is CCA-adding enzyme.